A 151-amino-acid chain; its full sequence is uncharacterized protein (151 aa).

Positions 40–57 (QMNRRNSENNTFDASNVG) are enriched in polar residues. Positions 40 to 125 (QMNRRNSENN…KRQPHYAEPI (86 aa)) are disordered. Residues 83-110 (QRQNGRQHQHAGQQQPQHQHTQSQTRQT) show a composition bias toward low complexity.

This is an uncharacterized protein from Bacillus subtilis (strain 168).